We begin with the raw amino-acid sequence, 1376 residues long: DNA-directed RNA polymerase subunit beta'' (1376 aa).

Zn(2+) contacts are provided by cysteine 221, cysteine 290, cysteine 297, and cysteine 300. The disordered stretch occupies residues 895–919; it reads PSGSGFPSDNELDHSNRNPFSSSYP.

Belongs to the RNA polymerase beta' chain family. RpoC2 subfamily. In plastids the minimal PEP RNA polymerase catalytic core is composed of four subunits: alpha, beta, beta', and beta''. When a (nuclear-encoded) sigma factor is associated with the core the holoenzyme is formed, which can initiate transcription. Zn(2+) serves as cofactor.

It localises to the plastid. The protein resides in the chloroplast. It carries out the reaction RNA(n) + a ribonucleoside 5'-triphosphate = RNA(n+1) + diphosphate. Its function is as follows. DNA-dependent RNA polymerase catalyzes the transcription of DNA into RNA using the four ribonucleoside triphosphates as substrates. This is DNA-directed RNA polymerase subunit beta'' from Pelargonium hortorum (Common geranium).